A 199-amino-acid chain; its full sequence is Recombination protein RecR (199 aa).

The segment at 58–73 adopts a C4-type zinc-finger fold; the sequence is CKKCFNLTSEDECEIC. Residues 81–175 enclose the Toprim domain; that stretch reads KLICVVSETK…KVTRIAYGLP (95 aa).

The protein belongs to the RecR family.

Its function is as follows. May play a role in DNA repair. It seems to be involved in an RecBC-independent recombinational process of DNA repair. It may act with RecF and RecO. The polypeptide is Recombination protein RecR (Prochlorococcus marinus (strain AS9601)).